A 305-amino-acid polypeptide reads, in one-letter code: uncharacterized protein (305 aa).

Positions 5–233 (LELKNVTKNI…ENDTYFFQVE (229 aa)) constitute an ABC transporter domain. 37–44 (GPNGAGKT) is a binding site for ATP.

It belongs to the ABC transporter superfamily.

This is an uncharacterized protein from Bacillus subtilis (strain 168).